We begin with the raw amino-acid sequence, 445 residues long: Signal recognition particle 54 kDa protein (445 aa).

Residues 106-113 (GLQGSGKT), 186-190 (DTAGR), and 244-247 (TKLD) each bind GTP.

This sequence belongs to the GTP-binding SRP family. SRP54 subfamily. Part of the signal recognition particle protein translocation system, which is composed of SRP and FtsY. Archaeal SRP consists of a 7S RNA molecule of 300 nucleotides and two protein subunits: SRP54 and SRP19.

The protein resides in the cytoplasm. The catalysed reaction is GTP + H2O = GDP + phosphate + H(+). In terms of biological role, involved in targeting and insertion of nascent membrane proteins into the cytoplasmic membrane. Binds to the hydrophobic signal sequence of the ribosome-nascent chain (RNC) as it emerges from the ribosomes. The SRP-RNC complex is then targeted to the cytoplasmic membrane where it interacts with the SRP receptor FtsY. The chain is Signal recognition particle 54 kDa protein from Methanobrevibacter smithii (strain ATCC 35061 / DSM 861 / OCM 144 / PS).